A 252-amino-acid polypeptide reads, in one-letter code: Autophagy-related protein 27 (252 aa).

The N-terminal stretch at 1–15 (MILASLLTFATAALA) is a signal peptide. One can recognise an MRH domain in the interval 16-161 (FDCSDKELER…SMKTKAACIT (146 aa)). Residues 16 to 176 (FDCSDKELER…KKEKHDNGES (161 aa)) are Lumenal-facing. 3 disulfides stabilise this stretch: Cys18–Cys57, Cys66–Cys73, and Cys130–Cys159. A glycan (N-linked (GlcNAc...) asparagine) is linked at Asn49. A helical transmembrane segment spans residues 177–197 (WGWFTWIFIFLVLFLSIYIIG). The Cytoplasmic portion of the chain corresponds to 198-252 (GAWFQYNKGNAIDFQSALKEVVENFIELLKGLPSFGKEIIEKFTGRSNRGEYSAV).

The protein belongs to the ATG27 family.

It localises to the cytoplasmic vesicle membrane. The protein localises to the golgi apparatus membrane. The protein resides in the mitochondrion membrane. Its subcellular location is the preautophagosomal structure membrane. In terms of biological role, plays a key role in autophagy. Effector of VPS34 phosphatidylinositol 3-phosphate kinase signaling. Regulates the cytoplasm to vacuole transport (Cvt) vesicle formation. Plays a role in ATG protein retrieval from the pre-autophagosomal structure (PAS) and is especially required for autophagy-dependent cycling of ATG9. Finally, plays an important role in biofilm formation and resistance to antifungal compounds such as fluconazole, itraconazole, terbinafine and caspofungin. The polypeptide is Autophagy-related protein 27 (Candida albicans (strain SC5314 / ATCC MYA-2876) (Yeast)).